A 255-amino-acid chain; its full sequence is Myogenic factor 5 (255 aa).

The bHLH domain occupies aspartate 83–leucine 134. A disordered region spans residues aspartate 226 to arginine 249.

Efficient DNA binding requires dimerization with another bHLH protein.

The protein resides in the nucleus. Its function is as follows. Acts as a transcriptional activator that promotes transcription of muscle-specific target genes and plays a role in muscle differentiation. Together with MYOG and MYOD1, co-occupies muscle-specific gene promoter core region during myogenesis. Induces fibroblasts to differentiate into myoblasts. Probable sequence specific DNA-binding protein. This chain is Myogenic factor 5 (Myf5), found in Mus musculus (Mouse).